The sequence spans 280 residues: 2-dehydro-3-deoxyphosphooctonate aldolase 2 (280 aa).

Belongs to the KdsA family.

It localises to the cytoplasm. It carries out the reaction D-arabinose 5-phosphate + phosphoenolpyruvate + H2O = 3-deoxy-alpha-D-manno-2-octulosonate-8-phosphate + phosphate. Its pathway is carbohydrate biosynthesis; 3-deoxy-D-manno-octulosonate biosynthesis; 3-deoxy-D-manno-octulosonate from D-ribulose 5-phosphate: step 2/3. It functions in the pathway bacterial outer membrane biogenesis; lipopolysaccharide biosynthesis. This Pseudomonas putida (strain ATCC 47054 / DSM 6125 / CFBP 8728 / NCIMB 11950 / KT2440) protein is 2-dehydro-3-deoxyphosphooctonate aldolase 2 (kdsA2).